The following is a 140-amino-acid chain: Large ribosomal subunit protein uL11 (140 aa).

This sequence belongs to the universal ribosomal protein uL11 family. Part of the ribosomal stalk of the 50S ribosomal subunit. Interacts with L10 and the large rRNA to form the base of the stalk. L10 forms an elongated spine to which L12 dimers bind in a sequential fashion forming a multimeric L10(L12)X complex. Post-translationally, one or more lysine residues are methylated.

Functionally, forms part of the ribosomal stalk which helps the ribosome interact with GTP-bound translation factors. The polypeptide is Large ribosomal subunit protein uL11 (Karelsulcia muelleri (strain GWSS) (Sulcia muelleri)).